A 349-amino-acid polypeptide reads, in one-letter code: Protein-glutamate methylesterase/protein-glutamine glutaminase (349 aa).

Positions 5–122 (RVLSVDDSAL…REGMLAYSEM (118 aa)) constitute a Response regulatory domain. Asp56 is modified (4-aspartylphosphate). One can recognise a CheB-type methylesterase domain in the interval 152–344 (LLSSEKLIAI…QQMLAKISAG (193 aa)). Catalysis depends on residues Ser164, His190, and Asp286.

The protein belongs to the CheB family. In terms of processing, phosphorylated by CheA. Phosphorylation of the N-terminal regulatory domain activates the methylesterase activity.

The protein localises to the cytoplasm. It carries out the reaction [protein]-L-glutamate 5-O-methyl ester + H2O = L-glutamyl-[protein] + methanol + H(+). The enzyme catalyses L-glutaminyl-[protein] + H2O = L-glutamyl-[protein] + NH4(+). Involved in chemotaxis. Part of a chemotaxis signal transduction system that modulates chemotaxis in response to various stimuli. Catalyzes the demethylation of specific methylglutamate residues introduced into the chemoreceptors (methyl-accepting chemotaxis proteins or MCP) by CheR. Also mediates the irreversible deamidation of specific glutamine residues to glutamic acid. The sequence is that of Protein-glutamate methylesterase/protein-glutamine glutaminase from Salmonella choleraesuis (strain SC-B67).